Consider the following 250-residue polypeptide: Triosephosphate isomerase (250 aa).

9–11 (NWK) contacts substrate. His-95 serves as the catalytic Electrophile. Glu-167 serves as the catalytic Proton acceptor. Residues Gly-173, Ser-213, and 234 to 235 (GG) contribute to the substrate site.

Belongs to the triosephosphate isomerase family. Homodimer.

It localises to the cytoplasm. The enzyme catalyses D-glyceraldehyde 3-phosphate = dihydroxyacetone phosphate. The protein operates within carbohydrate biosynthesis; gluconeogenesis. Its pathway is carbohydrate degradation; glycolysis; D-glyceraldehyde 3-phosphate from glycerone phosphate: step 1/1. Involved in the gluconeogenesis. Catalyzes stereospecifically the conversion of dihydroxyacetone phosphate (DHAP) to D-glyceraldehyde-3-phosphate (G3P). The chain is Triosephosphate isomerase from Chloroflexus aurantiacus (strain ATCC 29366 / DSM 635 / J-10-fl).